Consider the following 642-residue polypeptide: Voltage-gated potassium channel KCNC2 (642 aa).

The Cytoplasmic segment spans residues 1–233; sequence MGKIESNERV…EDPYSSRAAR (233 aa). Residues 45-98 form a disordered region; it reads DCLTAAGDKLQPLPPPLSPPPRPPPLSPVPSGCFEGGAGNCSSHGGNGGNGGSD. Positions 56 to 72 are enriched in pro residues; the sequence is PLPPPLSPPPRPPPLSP. The segment covering 78–98 has biased composition (gly residues); the sequence is FEGGAGNCSSHGGNGGNGGSD. H128, C134, C155, and C156 together coordinate Zn(2+). The helical transmembrane segment at 234–254 threads the bilayer; the sequence is FIAFASLFFILVSITTFCLET. Residues N263 and N270 are each glycosylated (N-linked (GlcNAc...) asparagine). Residues 287 to 307 traverse the membrane as a helical segment; the sequence is TYVEGVCVVWFTFEFLVRIVF. Residues 308–317 lie on the Cytoplasmic side of the membrane; the sequence is SPNKLEFIKN. A helical membrane pass occupies residues 318 to 338; that stretch reads LLNIIDFVAILPFYLEVGLSG. The chain crosses the membrane as a helical; Voltage-sensor span at residues 350–372; sequence FLRVVRFVRILRIFKLTRHFVGL. Residues 373–385 are Cytoplasmic-facing; sequence RVLGHTLRASTNE. Residues 386 to 406 form a helical membrane-spanning segment; the sequence is FLLLIIFLALGVLIFATMIYY. Residues T441, L442, G443, and Y444 each contribute to the K(+) site. A Selectivity filter motif is present at residues 441–446; it reads TLGYGD. Residues 457–477 form a helical membrane-spanning segment; that stretch reads VGALCALAGVLTIAMPVPVIV. Residues 478-642 are Cytoplasmic-facing; that stretch reads NNFGMYYSLA…RSRSPIPSIL (165 aa). The segment at 542–576 is disordered; it reads SVLSGDDSTGSEPPLSPPERLPIRRSSTRDKNRRG. The residue at position 604 (S604) is a Phosphoserine.

Belongs to the potassium channel family. C (Shaw) (TC 1.A.1.2) subfamily. Kv3.2/KCNC2 sub-subfamily. In terms of assembly, homotetramer and heterotetramer with other channel-forming alpha subunits, such as KCNC1. Interacts with KCNC1. Homotetramer or heterotetramer channel activity is regulated by association with modulating ancillary subunits such as KCNE1, KCNE2 and KCNE3, creating a functionally diverse range of channel complexes. Interacts with KCNE1, KCNE2 and KCNE3. Phosphorylated by PKA in cortical synaptosomes. cAMP-dependent phosphorylation inhibits channel activity. Histamine H2 receptor- and PKA-induced phosphorylation extends action potential spike duration, reduces action potential spike amplitude, sustains maximum firing frequency in hippocampal interneurons; also reduces the incidence of high-frequency oscillations in hippocampal CA3 pyramidal cell layers. As to expression, weakly expressed in the brain at postnatal age day 7 (P7) and increased at P60. Not detectable in newborn hippocampus. Expressed weakly at P7 in the early developing hippocampus, increasing progressively and reaching a plateau of expression at P14 that is maintained throughout P51. Expressed in paravalbumin- and somatostain-containing inhibitory interneurons of the hippocampus; in the CA1/CA3 stratum oriens-alveus and stratum pyramidale and in cells within the hilus and subgranular layer of the dentate gyrus (DG). Strongly expressed in parvalbumin (PV)-containing fast-spiking GABAergic inhibitor interneurons in deep cortical layers V and VI. Also expressed in non-fast-spiking calbindin (CB)- and/or somatostatin (SOM)-containing interneurons in deep cortical layers V and VI. Expressed in starburst amacrine cells of the retina in the inner nuclear layer (INL) and ganglion cell layer (GCL). Expressed in the suprachiasmatic nucleus (SCN) (at protein level). Expressed in the early developing brain, increasing progressively until P14.

Its subcellular location is the cell membrane. It is found in the membrane. It localises to the perikaryon. The protein localises to the cell projection. The protein resides in the axon. Its subcellular location is the dendrite. It is found in the postsynaptic cell membrane. It localises to the presynaptic cell membrane. The protein localises to the synapse. The protein resides in the synaptosome. Its subcellular location is the apical cell membrane. It is found in the basolateral cell membrane. It carries out the reaction K(+)(in) = K(+)(out). Its activity is regulated as follows. Inhibited by millimolar levels of tetraethylammonium (TEA). Contrary to other channels, inhibited only by millimolar levels of 4-aminopyridine (4-AP). Inhibited by Stichodactyla helianthus peptide ShK. In terms of biological role, voltage-gated potassium channel that mediates transmembrane potassium transport in excitable membranes, primarily in the brain. Contributes to the regulation of the fast action potential repolarization and in sustained high-frequency firing in neurons of the central nervous system. Homotetramer channels mediate delayed-rectifier voltage-dependent potassium currents that activate rapidly at high-threshold voltages and inactivate slowly. Forms tetrameric channels through which potassium ions pass in accordance with their electrochemical gradient. The channel alternates between opened and closed conformations in response to the voltage difference across the membrane. Can form functional homotetrameric and heterotetrameric channels that contain variable proportions of KCNC1, and possibly other family members as well; channel properties depend on the type of alpha subunits that are part of the channel. Channel properties may be modulated by either the association with ancillary subunits, such as KCNE1, KCNE2 and KCNE3 or indirectly by nitric oxide (NO) through a cGMP- and PKG-mediated signaling cascade, slowing channel activation and deactivation of delayed rectifier potassium channels. Contributes to fire sustained trains of very brief action potentials at high frequency in thalamocortical and suprachiasmatic nucleus (SCN) neurons, in hippocampal and neocortical interneurons and in retinal ganglion cells. Sustained maximal action potential firing frequency in inhibitory hippocampal interneurons is negatively modulated by histamine H2 receptor activation in a cAMP- and protein kinase (PKA) phosphorylation-dependent manner. Plays a role in maintaining the fidelity of synaptic transmission in neocortical GABAergic interneurons by generating action potential (AP) repolarization at nerve terminals, thus reducing spike-evoked calcium influx and GABA neurotransmitter release. Required for long-range synchronization of gamma oscillations over distance in the neocortex. Contributes to the modulation of the circadian rhythm of spontaneous action potential firing in suprachiasmatic nucleus (SCN) neurons in a light-dependent manner. The chain is Voltage-gated potassium channel KCNC2 from Mus musculus (Mouse).